Consider the following 604-residue polypeptide: Inactive all-trans-retinol 13,14-reductase (604 aa).

A signal peptide spans 1-17; the sequence is MWWILLFLEWFVDWARG.

This sequence belongs to the carotenoid/retinoid oxidoreductase family. CrtISO subfamily.

This Danio rerio (Zebrafish) protein is Inactive all-trans-retinol 13,14-reductase (retsatl).